A 79-amino-acid chain; its full sequence is Gas vesicle protein A2 (79 aa).

Residues 9 to 19 (LAEVLDRVLDK) are alpha helix 1. The interval 23–31 (VDVWARISL) is beta-strand 1. Residues 32–34 (VGI) form a beta turn region. Positions 35–43 (EILTVEARV) are beta-strand 2. The alpha helix 2 stretch occupies residues 48–67 (VDTFLHYAEEIAKIEQAELT).

It belongs to the gas vesicle GvpA family. As to quaternary structure, the gas vesicle shell is 2 nm thick and consists of a single layer of this protein. It forms helical ribs nearly perpendicular to the long axis of the vesicle.

It is found in the gas vesicle shell. Its function is as follows. Gas vesicles are hollow, gas filled proteinaceous nanostructures found in several microbial planktonic microorganisms. They allow positioning of halobacteria at the optimal depth for growth in the poorly aerated shallow brine pools of their habitat. GvpA forms the gas vesicle shell. This protein can replace the p-gvpA gene in the p-vac locus and increases the critical collapse pressure (CCP) of hybrid gas vesicles from 0.66 MPa to 0.90 MPa. In stationary phase gas vesicles about 30 times more GvpA1 is found than GvpA2. In terms of biological role, expression of 2 c-vac DNA fragments containing 2 divergently transcribed regions (gvpE-gvpF-gvpG-gvpH-gvpI-gvpJ-gvpK-gvpL-gvpM and gvpA-gvpC-gvpN-gvpO) allows H.volcanii to produce gas vesicles. All site-directed mutagenesis is tested in H.volcanii. This is Gas vesicle protein A2 from Halobacterium salinarum (strain ATCC 700922 / JCM 11081 / NRC-1) (Halobacterium halobium).